We begin with the raw amino-acid sequence, 72 residues long: Cell division protein ZapB (72 aa).

Positions 5–71 (ILDQLEEKIK…LRSLLGQIDN (67 aa)) form a coiled coil.

Belongs to the ZapB family. Homodimer. The ends of the coiled-coil dimer bind to each other, forming polymers. Interacts with FtsZ.

It is found in the cytoplasm. Functionally, non-essential, abundant cell division factor that is required for proper Z-ring formation. It is recruited early to the divisome by direct interaction with FtsZ, stimulating Z-ring assembly and thereby promoting cell division earlier in the cell cycle. Its recruitment to the Z-ring requires functional FtsA or ZipA. In Actinobacillus pleuropneumoniae serotype 5b (strain L20), this protein is Cell division protein ZapB.